We begin with the raw amino-acid sequence, 265 residues long: Cytochrome b-c1 complex subunit Rieske, mitochondrial (265 aa).

The N-terminal 53 residues, 1–53, are a transit peptide targeting the mitochondrion; it reads MLRVAGRRLSSSAARSSSTFFTRSSFTVTDDSSPARSPSPSLTSSFLDQIRGF. The Mitochondrial matrix portion of the chain corresponds to 54 to 102; it reads SSNSVSPAHQLGLVSDLPATVAAIKNPSSKIVYDDSNHERYPPGDPSKR. The helical transmembrane segment at 103–125 threads the bilayer; sequence AFAYFVLTGGRFVYASSVRLLIL. The Mitochondrial intermembrane portion of the chain corresponds to 126-265; it reads KFVLSMSASK…FLEENKLLIG (140 aa). One can recognise a Rieske domain in the interval 175–263; the sequence is IKLANSVDLG…YSFLEENKLL (89 aa). 4 residues coordinate [2Fe-2S] cluster: Cys-208, His-210, Cys-227, and His-230. Cysteines 213 and 229 form a disulfide.

It belongs to the Rieske iron-sulfur protein family. Component of the ubiquinol-cytochrome c oxidoreductase (cytochrome b-c1 complex, complex III, CIII), a multisubunit enzyme composed of 3 respiratory subunits cytochrome b, cytochrome c1 and Rieske protein, 2 core protein subunits, and several low-molecular weight protein subunits. The complex exists as an obligatory dimer and forms supercomplexes (SCs) in the inner mitochondrial membrane with cytochrome c oxidase (complex IV, CIV). [2Fe-2S] cluster serves as cofactor.

The protein resides in the mitochondrion inner membrane. The catalysed reaction is a quinol + 2 Fe(III)-[cytochrome c](out) = a quinone + 2 Fe(II)-[cytochrome c](out) + 2 H(+)(out). Its function is as follows. Component of the ubiquinol-cytochrome c oxidoreductase, a multisubunit transmembrane complex that is part of the mitochondrial electron transport chain which drives oxidative phosphorylation. The respiratory chain contains 3 multisubunit complexes succinate dehydrogenase (complex II, CII), ubiquinol-cytochrome c oxidoreductase (cytochrome b-c1 complex, complex III, CIII) and cytochrome c oxidase (complex IV, CIV), that cooperate to transfer electrons derived from NADH and succinate to molecular oxygen, creating an electrochemical gradient over the inner membrane that drives transmembrane transport and the ATP synthase. The cytochrome b-c1 complex catalyzes electron transfer from ubiquinol to cytochrome c, linking this redox reaction to translocation of protons across the mitochondrial inner membrane, with protons being carried across the membrane as hydrogens on the quinol. In the process called Q cycle, 2 protons are consumed from the matrix, 4 protons are released into the intermembrane space and 2 electrons are passed to cytochrome c. The Rieske protein is a catalytic core subunit containing a [2Fe-2S] iron-sulfur cluster. It cycles between 2 conformational states during catalysis to transfer electrons from the quinol bound in the Q(0) site in cytochrome b to cytochrome c1. The protein is Cytochrome b-c1 complex subunit Rieske, mitochondrial (FES1) of Solanum tuberosum (Potato).